A 287-amino-acid polypeptide reads, in one-letter code: MNMSKAEAFWQLTRMNRPIGSLLLLWPTLWALFLAADGLPDWHVLIVFVLGVVFMRSAGCVINDFADRKVDGHVKRTANRPLPSGLISSKEALSFFAVLVVCSFLLVLTMNTLTIMLSSIGIVLAIAYPFMKRVTYLPQFVLGLAFSWAIPMAYAAESNQVPSEAWLLFVINALWTIAYDTQYAMVDRDDDVKIGIKSTAILFGRYDKTIIGLLQLSVLALLIVLGSQLALSGIYYWGILAAAGFFVYQQWLIKGREREACFKAFLNNNYVGGLIFIAISASVLYQS.

A run of 8 helical transmembrane segments spans residues 19 to 39 (IGSL…ADGL), 42 to 62 (WHVL…GCVI), 95 to 115 (FFAV…TLTI), 136 to 156 (YLPQ…AYAA), 166 to 186 (WLLF…YAMV), 210 to 230 (IIGL…SQLA), 233 to 253 (GIYY…QWLI), and 264 to 284 (AFLN…ASVL).

It belongs to the UbiA prenyltransferase family. The cofactor is Mg(2+).

The protein resides in the cell inner membrane. The enzyme catalyses all-trans-octaprenyl diphosphate + 4-hydroxybenzoate = 4-hydroxy-3-(all-trans-octaprenyl)benzoate + diphosphate. It functions in the pathway cofactor biosynthesis; ubiquinone biosynthesis. Its function is as follows. Catalyzes the prenylation of para-hydroxybenzoate (PHB) with an all-trans polyprenyl group. Mediates the second step in the final reaction sequence of ubiquinone-8 (UQ-8) biosynthesis, which is the condensation of the polyisoprenoid side chain with PHB, generating the first membrane-bound Q intermediate 3-octaprenyl-4-hydroxybenzoate. The sequence is that of 4-hydroxybenzoate octaprenyltransferase from Aliivibrio fischeri (strain MJ11) (Vibrio fischeri).